The primary structure comprises 107 residues: Late histone H2B.L4 (107 aa).

Ser94 is a glycosylation site (O-linked (GlcNAc) serine). A Glycyl lysine isopeptide (Lys-Gly) (interchain with G-Cter in ubiquitin) cross-link involves residue Lys102.

The protein belongs to the histone H2B family. As to quaternary structure, the nucleosome is a histone octamer containing two molecules each of H2A, H2B, H3 and H4 assembled in one H3-H4 heterotetramer and two H2A-H2B heterodimers. The octamer wraps approximately 147 bp of DNA. In terms of processing, monoubiquitination gives a specific tag for epigenetic transcriptional activation and is also prerequisite for histone H3 'Lys-4' and 'Lys-79' methylation. Post-translationally, glcNAcylation at Ser-94 promotes monoubiquitination of Lys-102. It fluctuates in response to extracellular glucose, and associates with transcribed genes.

The protein resides in the nucleus. It is found in the chromosome. Functionally, core component of nucleosome. Nucleosomes wrap and compact DNA into chromatin, limiting DNA accessibility to the cellular machineries which require DNA as a template. Histones thereby play a central role in transcription regulation, DNA repair, DNA replication and chromosomal stability. DNA accessibility is regulated via a complex set of post-translational modifications of histones, also called histone code, and nucleosome remodeling. This chain is Late histone H2B.L4, found in Strongylocentrotus purpuratus (Purple sea urchin).